The chain runs to 414 residues: Cyclin-B1-3 (414 aa).

This sequence belongs to the cyclin family. Cyclin AB subfamily. In terms of tissue distribution, expressed in roots, stems and flowers.

This chain is Cyclin-B1-3 (CYCB1-3), found in Arabidopsis thaliana (Mouse-ear cress).